An 86-amino-acid polypeptide reads, in one-letter code: Neuropeptide-like 2 (86 aa).

An N-terminal signal peptide occupies residues M1–S19. 2 propeptides span residues A20–L34 and I45–T86.

In terms of tissue distribution, hemolymph (at protein level).

Its subcellular location is the secreted. This chain is Neuropeptide-like 2 (Nplp2), found in Drosophila melanogaster (Fruit fly).